A 142-amino-acid chain; its full sequence is Small ribosomal subunit protein uS12 (142 aa).

Belongs to the universal ribosomal protein uS12 family. In terms of assembly, part of the 30S ribosomal subunit.

Functionally, with S4 and S5 plays an important role in translational accuracy. Located at the interface of the 30S and 50S subunits. In Methanocorpusculum labreanum (strain ATCC 43576 / DSM 4855 / Z), this protein is Small ribosomal subunit protein uS12.